We begin with the raw amino-acid sequence, 544 residues long: Dynein intermediate chain 1 (544 aa).

WD repeat units lie at residues 241 to 281 (KARS…YPVS), 289 to 330 (GHLE…RPSE), 342 to 387 (SQCI…QPSN), 402 to 441 (VMTSNSQNVFLEKNKDFALTSSFDWTVRLWQCSPSRNQHE), 461 to 501 (THKA…EAPV), and 506 to 544 (PDGKPLNKIAWQPEKRNLACGGLNGNVHIYKHLSPNLAN).

This sequence belongs to the dynein intermediate chain family.

It localises to the cytoplasm. Its function is as follows. Has a role in meiotic nuclear divsion where it promotes the movement of 'horsetails'. This is Dynein intermediate chain 1 (dic1) from Schizosaccharomyces pombe (strain 972 / ATCC 24843) (Fission yeast).